The sequence spans 153 residues: Large ribosomal subunit protein bL9 (153 aa).

This sequence belongs to the bacterial ribosomal protein bL9 family.

In terms of biological role, binds to the 23S rRNA. This is Large ribosomal subunit protein bL9 from Synechococcus sp. (strain JA-3-3Ab) (Cyanobacteria bacterium Yellowstone A-Prime).